The chain runs to 303 residues: Bifunctional protein FolD (303 aa).

Residues 175 to 177 (GVS) and I243 contribute to the NADP(+) site.

The protein belongs to the tetrahydrofolate dehydrogenase/cyclohydrolase family. In terms of assembly, homodimer.

It carries out the reaction (6R)-5,10-methylene-5,6,7,8-tetrahydrofolate + NADP(+) = (6R)-5,10-methenyltetrahydrofolate + NADPH. The enzyme catalyses (6R)-5,10-methenyltetrahydrofolate + H2O = (6R)-10-formyltetrahydrofolate + H(+). It participates in one-carbon metabolism; tetrahydrofolate interconversion. Its function is as follows. Catalyzes the oxidation of 5,10-methylenetetrahydrofolate to 5,10-methenyltetrahydrofolate and then the hydrolysis of 5,10-methenyltetrahydrofolate to 10-formyltetrahydrofolate. This Xanthomonas euvesicatoria pv. vesicatoria (strain 85-10) (Xanthomonas campestris pv. vesicatoria) protein is Bifunctional protein FolD.